The primary structure comprises 674 residues: Oxidative stress response two-component system protein SSK1 (674 aa).

Positions 66-75 (SPTTLTTPQN) are enriched in polar residues. 3 disordered regions span residues 66–115 (SPTT…GTTK), 259–354 (QSSI…SVAT), and 372–497 (ANNN…NDPT). A compositionally biased stretch (basic and acidic residues) spans 90-99 (ETTRKNRPDD). Residues 101–115 (NSITPSNSINSGTTK) are compositionally biased toward polar residues. Residues 264–276 (NNNNNNSNVNNNN) show a composition bias toward low complexity. 2 stretches are compositionally biased toward polar residues: residues 302 to 314 (MNRSSFSTNNNPV) and 323 to 336 (VSPSNLGVSRNSPV). Low complexity-rich tracts occupy residues 343–352 (SNPVSSPNSV) and 372–383 (ANNNSNQASQSS). Residues 391–416 (VLSEDGSKSVNDKTEEVVSSKLKPND) are compositionally biased toward basic and acidic residues. The span at 422–433 (QAKQQEQQTAEQ) shows a compositional bias: low complexity. Residues 434-444 (SENGFSETSAS) are compositionally biased toward polar residues. A compositionally biased stretch (low complexity) spans 459-481 (TKSSTTATTTSSNSISNNNNTSS). One can recognise a Response regulatory domain in the interval 507-653 (SVLVVEDNAI…WLQNKITEWG (147 aa)). Residue aspartate 556 is modified to 4-aspartylphosphate.

It belongs to the SSK1 family.

Functionally, final receptor of the SLN1-YPD1-SSK1 two-component regulatory system, which controls activity of the HOG1 pathway in response to oxidative stress and probably also to the osmolarity of the extracellular environment. Involved in cell wall biosynthesis, hyphal growth, and virulence. Regulates the expression of CHK1, as well as of a subset of genes whose functions are associated with cell wall biosynthesis and adaptation to oxidative stress. Provides at least partial adaptive functions for the survival following encounter with human neutrophils. This chain is Oxidative stress response two-component system protein SSK1 (SSK1), found in Candida albicans (strain SC5314 / ATCC MYA-2876) (Yeast).